The primary structure comprises 117 residues: Transcription elongation factor A protein-like 8 (117 aa).

Positions 1–82 (MQKSCDENEG…EEVIRGVDEL (82 aa)) are disordered. The span at 41–82 (NVREETEGSHRGEPAEPSPEPKEDTPARHLNPEEVIRGVDEL) shows a compositional bias: basic and acidic residues. Residues 73 to 100 (EEVIRGVDELERLREEIRRVRNKFVLMH) are a coiled coil.

The protein belongs to the TFS-II family. TFA subfamily.

It is found in the nucleus. May be involved in transcriptional regulation. The polypeptide is Transcription elongation factor A protein-like 8 (Tceal8) (Mus musculus (Mouse)).